A 95-amino-acid chain; its full sequence is MSDNVIDKLYSIILDRMKTMKEGSYTVELIKRGKHYVAQKVGEESTEAIIASLVESQQRFVEEVSDLIYHLLVLMALENVTPQDVYKELERRMKK.

The protein belongs to the PRA-PH family.

The protein localises to the cytoplasm. The catalysed reaction is 1-(5-phospho-beta-D-ribosyl)-ATP + H2O = 1-(5-phospho-beta-D-ribosyl)-5'-AMP + diphosphate + H(+). It participates in amino-acid biosynthesis; L-histidine biosynthesis; L-histidine from 5-phospho-alpha-D-ribose 1-diphosphate: step 2/9. The chain is Phosphoribosyl-ATP pyrophosphatase from Sulfolobus acidocaldarius (strain ATCC 33909 / DSM 639 / JCM 8929 / NBRC 15157 / NCIMB 11770).